A 540-amino-acid polypeptide reads, in one-letter code: Probable pectinesterase/pectinesterase inhibitor 60 (540 aa).

The N-terminal stretch at 1–31 is a signal peptide; sequence MNIMMVQNISFLSLHLLLILLLCLRPLTTVA. Residues 32–185 are pectinesterase inhibitor 60; that stretch reads DGNSTNIDGW…SHLISNCLAV (154 aa). 6 N-linked (GlcNAc...) asparagine glycosylation sites follow: Asn34, Asn91, Asn95, Asn120, Asn161, and Asn195. Positions 225-526 are pectinesterase 60; sequence NLVVAKDGSG…FSVGKFIAGT (302 aa). 2 residues coordinate substrate: Thr302 and Gln332. Asp355 functions as the Proton donor; for pectinesterase activity in the catalytic mechanism. Cysteines 369 and 389 form a disulfide. The Nucleophile; for pectinesterase activity role is filled by Asp376. The substrate site is built by Arg444 and Trp446.

This sequence in the N-terminal section; belongs to the PMEI family. It in the C-terminal section; belongs to the pectinesterase family. Expressed in siliques.

It is found in the secreted. The protein resides in the cell wall. It catalyses the reaction [(1-&gt;4)-alpha-D-galacturonosyl methyl ester](n) + n H2O = [(1-&gt;4)-alpha-D-galacturonosyl](n) + n methanol + n H(+). It functions in the pathway glycan metabolism; pectin degradation; 2-dehydro-3-deoxy-D-gluconate from pectin: step 1/5. Functionally, acts in the modification of cell walls via demethylesterification of cell wall pectin. This is Probable pectinesterase/pectinesterase inhibitor 60 (PME60) from Arabidopsis thaliana (Mouse-ear cress).